Reading from the N-terminus, the 256-residue chain is Calsenilin (256 aa).

Positions 1 to 20 (MQPAKEVTKASDGSLLGDLG) are disordered. S14 is modified (phosphoserine). Residue K26 forms a Glycyl lysine isopeptide (Lys-Gly) (interchain with G-Cter in SUMO1) linkage. 2 S-palmitoyl cysteine lipidation sites follow: C45 and C46. At S60 the chain carries Phosphoserine. Phosphoserine; by CK1 is present on S63. Positions 67 to 123 (LELSTVRHQPEGLDQLQAQTKFTKKELQSLYRGFKNECPTGLVDEDTFKLIYAQFFP) constitute an EF-hand 1; degenerate domain. Residue K90 forms a Glycyl lysine isopeptide (Lys-Gly) (interchain with G-Cter in SUMO1) linkage. EF-hand domains lie at 126–161 (DATTYAHFLFNAFDADGNGAIHFEDFVVGLSILLRG), 162–197 (TVHEKLKWAFNLYDINKDGYITKEEMLAIMKSIYDM), and 210–245 (APAEHVERFFEKMDRNQDGVVTIEEFLEACQKDENI). The Ca(2+) site is built by D175, N177, D179, Y181, E186, D223, N225, D227, and E234. Residues 243 to 256 (ENIMSSMQLFENVI) are interaction with KCND2.

It belongs to the recoverin family. Binds to DNA as a homomultimer. Dimerization is induced by binding to calcium. Interacts with the C-terminus of PSEN1 and PSEN2 and with PSEN2 CTF subunit. Associates with KCN1. Component of heteromultimeric potassium channels. Identified in potassium channel complexes containing KCND1, KCND2, KCND3, KCNIP1, KCNIP2, KCNIP3, KCNIP4, DPP6 and DPP10. Interacts with KCND2 and KCND3. Post-translationally, palmitoylated. Palmitoylation enhances association with the plasma membrane. In terms of processing, proteolytically cleaved by caspase-3. Phosphorylation at Ser-63 inhibits cleavage by CASP3. Highly expressed in brain. Widely expressed at lower levels. Expression levels are elevated in brain cortex regions affected by Alzheimer disease.

It localises to the cytoplasm. The protein resides in the cell membrane. Its subcellular location is the endoplasmic reticulum. The protein localises to the golgi apparatus. It is found in the nucleus. In terms of biological role, calcium-dependent transcriptional repressor that binds to the DRE element of genes including PDYN and FOS. Affinity for DNA is reduced upon binding to calcium and enhanced by binding to magnesium. Seems to be involved in nociception. Its function is as follows. Regulatory subunit of Kv4/D (Shal)-type voltage-gated rapidly inactivating A-type potassium channels, such as KCND2/Kv4.2 and KCND3/Kv4.3. Modulates channel expression at the cell membrane, gating characteristics, inactivation kinetics and rate of recovery from inactivation in a calcium-dependent and isoform-specific manner. Functionally, may play a role in the regulation of PSEN2 proteolytic processing and apoptosis. Together with PSEN2 involved in modulation of amyloid-beta formation. The sequence is that of Calsenilin (KCNIP3) from Homo sapiens (Human).